Here is a 570-residue protein sequence, read N- to C-terminus: Urease subunit alpha (570 aa).

The region spanning 131 to 570 (GGMDSHIHFI…LPMAQRYFLF (440 aa)) is the Urease domain. H136, H138, and K219 together coordinate Ni(2+). K219 carries the N6-carboxylysine modification. Substrate is bound at residue H221. Ni(2+) contacts are provided by H248 and H274. H322 acts as the Proton donor in catalysis. Residue D362 participates in Ni(2+) binding.

This sequence belongs to the metallo-dependent hydrolases superfamily. Urease alpha subunit family. Heterotrimer of UreA (gamma), UreB (beta) and UreC (alpha) subunits. Three heterotrimers associate to form the active enzyme. Ni cation is required as a cofactor. In terms of processing, carboxylation allows a single lysine to coordinate two nickel ions.

Its subcellular location is the cytoplasm. It carries out the reaction urea + 2 H2O + H(+) = hydrogencarbonate + 2 NH4(+). The protein operates within nitrogen metabolism; urea degradation; CO(2) and NH(3) from urea (urease route): step 1/1. This Sinorhizobium medicae (strain WSM419) (Ensifer medicae) protein is Urease subunit alpha.